Reading from the N-terminus, the 722-residue chain is Capsid protein VP1 (722 aa).

Positions 14 to 59 (YLGPGNSLDQGEPTNPSDAAAKEHDEAYAAYLRSGKNPYLYFSPAD) are phospholipase A2-like. Disordered regions lie at residues 90-115 (VLTD…PPPH), 136-179 (LAPM…VGIS), and 497-531 (AGRG…TTGE). Residues 161-178 (SGNGSGGGGGGGSGGVGI) show a composition bias toward gly residues.

Belongs to the parvoviridae capsid protein family.

The protein localises to the virion. Its function is as follows. Capsid protein self-assembles to form an icosahedral capsid with a T=1 symmetry, about 22 nm in diameter, and consisting of 60 copies of two size variants of the capsid proteins, VP1 and VP2, which differ by the presence of an N-terminal extension in the minor protein VP1. The capsid encapsulates the genomic ssDNA. Capsid proteins are responsible for the attachment to host cell receptors. This attachment induces virion internalization predominantly through clathrin-dependent endocytosis. Binding to the host receptors also induces capsid rearrangements leading to surface exposure of VP1 N-terminus, specifically its phospholipase A2-like region and putative nuclear localization signal(s). VP1 N-terminus might serve as a lipolytic enzyme to breach the endosomal membrane during entry into host cell and might contribute to virus transport to the nucleus. This chain is Capsid protein VP1, found in Neovison vison (American mink).